An 81-amino-acid polypeptide reads, in one-letter code: NAD(P)H-quinone oxidoreductase subunit L (81 aa).

2 consecutive transmembrane segments (helical) span residues Leu-13–Phe-33 and Leu-51–Leu-71.

It belongs to the complex I NdhL subunit family. NDH-1 can be composed of about 15 different subunits; different subcomplexes with different compositions have been identified which probably have different functions.

The protein resides in the cellular thylakoid membrane. It catalyses the reaction a plastoquinone + NADH + (n+1) H(+)(in) = a plastoquinol + NAD(+) + n H(+)(out). It carries out the reaction a plastoquinone + NADPH + (n+1) H(+)(in) = a plastoquinol + NADP(+) + n H(+)(out). Functionally, NDH-1 shuttles electrons from an unknown electron donor, via FMN and iron-sulfur (Fe-S) centers, to quinones in the respiratory and/or the photosynthetic chain. The immediate electron acceptor for the enzyme in this species is believed to be plastoquinone. Couples the redox reaction to proton translocation, and thus conserves the redox energy in a proton gradient. Cyanobacterial NDH-1 also plays a role in inorganic carbon-concentration. This Synechococcus sp. (strain WH7803) protein is NAD(P)H-quinone oxidoreductase subunit L.